Consider the following 828-residue polypeptide: Calpain-A (828 aa).

Positions Met1–Glu14 constitute an EF-hand 1 domain. The Calpain catalytic domain occupies Leu88–Ser387. Active-site residues include Cys143, His299, and Asn327. Residues Pro388–Asp557 form a domain III region. The tract at residues His558 to Pro577 is linker. The domain IV stretch occupies residues Ile578 to Ser828. 4 EF-hand domains span residues Asp579–Asp614, Phe699–Trp734, Ser729–His764, and His764–Tyr799. The Ca(2+) site is built by Asp712, Asp714, Ser716, Lys718, Glu723, Asp742, Thr746, Arg748, and Gln753.

The protein belongs to the peptidase C2 family. In terms of processing, undergoes calcium-dependent autolytic cleavage between Lys-54 and Asn-55, which is necessary for activation of the protein. Localized to the anterior and posterior embryonic poles just after fertilization. Becomes distributed around the polar buds and just below the pole cells of the posterior pole during cleavage cycles. During these nuclear divisions anterior localization disappears. Localized to actin caps that underlie the plasma membrane, immediately above each nucleus at cleavage cycles 8 and 9. Localized to a small set of nerve, midgut and blood cells in adults.

The protein localises to the cytoplasm. Activated by millimolar concentrations of calcium, and by phosphatidylinositol 4,5-diphosphate, phosphatidylinositol 4-monophosphate, phosphatidylinositol and phosphatidic acid. Calcium-regulated non-lysosomal thiol-protease. Involved in the organization of the actin-related cytoskeleton during embryogenesis. The chain is Calpain-A (CalpA) from Drosophila melanogaster (Fruit fly).